A 624-amino-acid chain; its full sequence is Protein POLLEN DEFECTIVE IN GUIDANCE 1 (624 aa).

Positions 20–63 are disordered; the sequence is SFENDDTSIRRSSSDPITGNVASESPRDYGKRKRSKKKKKKVNQ. Residues 33 to 42 show a composition bias toward polar residues; sequence SDPITGNVAS. Over residues 49–61 the composition is skewed to basic residues; sequence GKRKRSKKKKKKV. 6 helical membrane passes run 263 to 283, 305 to 325, 391 to 411, 413 to 433, 545 to 565, and 578 to 598; these read VLID…LTVM, ASEL…ILLG, FVSD…ILLA, AITL…LLVS, LTFV…PVYA, and LWMV…KVLI.

It belongs to the TAPT1 family. Interacts with CRT3, but not with CRT1 or CNX. As to expression, expressed in inflorescences, siliques, roots and shoots. Expressed in early embryo, endosperm, mature pollen and pollen tubes, synergide cells and weakly in antipodal cells.

It is found in the membrane. The protein localises to the endoplasmic reticulum lumen. In terms of biological role, probable component of the calreticulin 3 (CRT3) complex, acting probably as a co-chaperone involved in protein retention in the endoplasmic reticulum lumen. Required for micropylar pollen tube guidance. Plays an essential role in cell plate orientation or positioning in early embryo patterning. In Arabidopsis thaliana (Mouse-ear cress), this protein is Protein POLLEN DEFECTIVE IN GUIDANCE 1 (POD1).